Consider the following 292-residue polypeptide: Chronophin (292 aa).

The active-site Nucleophile is the Asp-25. Mg(2+) contacts are provided by Asp-25 and Asp-27. Asp-27 (proton donor) is an active-site residue. Residues 58 to 60 (SNN), His-178, and Lys-209 contribute to the substrate site. Position 234 (Asp-234) interacts with Mg(2+).

This sequence belongs to the HAD-like hydrolase superfamily. As to quaternary structure, homodimer. The cofactor is Mg(2+). In terms of tissue distribution, ubiquitous. highly expressed in brain (at protein level).

The protein resides in the cytoplasm. Its subcellular location is the cytosol. It localises to the cytoskeleton. The protein localises to the cell projection. It is found in the ruffle membrane. The protein resides in the lamellipodium membrane. Its subcellular location is the cell membrane. The catalysed reaction is pyridoxal 5'-phosphate + H2O = pyridoxal + phosphate. The enzyme catalyses pyridoxine 5'-phosphate + H2O = pyridoxine + phosphate. It catalyses the reaction pyridoxamine + phosphate = pyridoxamine 5'-phosphate + H2O. It carries out the reaction O-phospho-L-seryl-[protein] + H2O = L-seryl-[protein] + phosphate. Its activity is regulated as follows. Inhibited by beryllium trifluoride. Functions as a pyridoxal phosphate (PLP) phosphatase, which also catalyzes the dephosphorylation of pyridoxine 5'-phosphate (PNP) and pyridoxamine 5'-phosphate (PMP), with order of substrate preference PLP &gt; PNP &gt; PMP and therefore plays a role in vitamin B6 metabolism. Also functions as a protein serine phosphatase that specifically dephosphorylates 'Ser-3' in proteins of the actin-depolymerizing factor (ADF)/cofilin family like CFL1 and DSTN. Thereby, regulates cofilin-dependent actin cytoskeleton reorganization, being required for normal progress through mitosis and normal cytokinesis. Does not dephosphorylate phosphothreonines in LIMK1. Does not dephosphorylate peptides containing phosphotyrosine. The sequence is that of Chronophin from Mus musculus (Mouse).